The following is a 1342-amino-acid chain: DNA-directed RNA polymerase subunit beta (1342 aa).

This sequence belongs to the RNA polymerase beta chain family. As to quaternary structure, the RNAP catalytic core consists of 2 alpha, 1 beta, 1 beta' and 1 omega subunit. When a sigma factor is associated with the core the holoenzyme is formed, which can initiate transcription.

The enzyme catalyses RNA(n) + a ribonucleoside 5'-triphosphate = RNA(n+1) + diphosphate. DNA-dependent RNA polymerase catalyzes the transcription of DNA into RNA using the four ribonucleoside triphosphates as substrates. This chain is DNA-directed RNA polymerase subunit beta, found in Vibrio vulnificus (strain CMCP6).